We begin with the raw amino-acid sequence, 91 residues long: Large ribosomal subunit protein bL27 (91 aa).

A disordered region spans residues 1 to 21 (MAHKKSGGSSRNGRDSAGRRL).

Belongs to the bacterial ribosomal protein bL27 family.

The protein is Large ribosomal subunit protein bL27 of Phenylobacterium zucineum (strain HLK1).